We begin with the raw amino-acid sequence, 673 residues long: UvrABC system protein B (673 aa).

One can recognise a Helicase ATP-binding domain in the interval 26–183 (ANFEAGLAKQ…RHLTDLQYTR (158 aa)). Residue 39 to 46 (GVTGSGKT) coordinates ATP. The Beta-hairpin signature appears at 92 to 115 (YYDYYQPEAYVPSSDTFIEKDSSI). A Helicase C-terminal domain is found at 431–597 (QVDDLMSEIH…SVERPISDIM (167 aa)). A disordered region spans residues 601–631 (REDAAEKKSGKGRSKSRQVAEETPDYRAMKP). Residues 618-630 (QVAEETPDYRAMK) are compositionally biased toward basic and acidic residues. The region spanning 635 to 670 (AGKLKSLEQKMYQHAKDLEFEAAAQIRDQIQKLKTA) is the UVR domain.

Belongs to the UvrB family. As to quaternary structure, forms a heterotetramer with UvrA during the search for lesions. Interacts with UvrC in an incision complex.

It is found in the cytoplasm. Its function is as follows. The UvrABC repair system catalyzes the recognition and processing of DNA lesions. A damage recognition complex composed of 2 UvrA and 2 UvrB subunits scans DNA for abnormalities. Upon binding of the UvrA(2)B(2) complex to a putative damaged site, the DNA wraps around one UvrB monomer. DNA wrap is dependent on ATP binding by UvrB and probably causes local melting of the DNA helix, facilitating insertion of UvrB beta-hairpin between the DNA strands. Then UvrB probes one DNA strand for the presence of a lesion. If a lesion is found the UvrA subunits dissociate and the UvrB-DNA preincision complex is formed. This complex is subsequently bound by UvrC and the second UvrB is released. If no lesion is found, the DNA wraps around the other UvrB subunit that will check the other stand for damage. The sequence is that of UvrABC system protein B from Xanthomonas oryzae pv. oryzae (strain PXO99A).